The following is a 485-amino-acid chain: Glutamyl-tRNA(Gln) amidotransferase subunit A (485 aa).

Active-site charge relay system residues include lysine 79 and serine 154. The Acyl-ester intermediate role is filled by serine 178.

This sequence belongs to the amidase family. GatA subfamily. In terms of assembly, heterotrimer of A, B and C subunits.

The catalysed reaction is L-glutamyl-tRNA(Gln) + L-glutamine + ATP + H2O = L-glutaminyl-tRNA(Gln) + L-glutamate + ADP + phosphate + H(+). Allows the formation of correctly charged Gln-tRNA(Gln) through the transamidation of misacylated Glu-tRNA(Gln) in organisms which lack glutaminyl-tRNA synthetase. The reaction takes place in the presence of glutamine and ATP through an activated gamma-phospho-Glu-tRNA(Gln). The polypeptide is Glutamyl-tRNA(Gln) amidotransferase subunit A (Geobacillus stearothermophilus (Bacillus stearothermophilus)).